The sequence spans 904 residues: Alanine--tRNA ligase (904 aa).

Zn(2+) is bound by residues His584, His588, Cys687, and His691.

The protein belongs to the class-II aminoacyl-tRNA synthetase family. Zn(2+) is required as a cofactor.

The protein resides in the cytoplasm. It carries out the reaction tRNA(Ala) + L-alanine + ATP = L-alanyl-tRNA(Ala) + AMP + diphosphate. In terms of biological role, catalyzes the attachment of alanine to tRNA(Ala) in a two-step reaction: alanine is first activated by ATP to form Ala-AMP and then transferred to the acceptor end of tRNA(Ala). Also edits incorrectly charged Ser-tRNA(Ala) and Gly-tRNA(Ala) via its editing domain. The polypeptide is Alanine--tRNA ligase (Mycobacterium bovis (strain ATCC BAA-935 / AF2122/97)).